A 182-amino-acid polypeptide reads, in one-letter code: Large ribosomal subunit protein uL22 (182 aa).

A disordered region spans residues 159–182; the sequence is AAAKPKATAKKATGEKSKAKTKAN.

The protein belongs to the universal ribosomal protein uL22 family. In terms of assembly, part of the 50S ribosomal subunit.

Functionally, this protein binds specifically to 23S rRNA; its binding is stimulated by other ribosomal proteins, e.g. L4, L17, and L20. It is important during the early stages of 50S assembly. It makes multiple contacts with different domains of the 23S rRNA in the assembled 50S subunit and ribosome. In terms of biological role, the globular domain of the protein is located near the polypeptide exit tunnel on the outside of the subunit, while an extended beta-hairpin is found that lines the wall of the exit tunnel in the center of the 70S ribosome. The chain is Large ribosomal subunit protein uL22 from Cytophaga hutchinsonii (strain ATCC 33406 / DSM 1761 / CIP 103989 / NBRC 15051 / NCIMB 9469 / D465).